The following is a 319-amino-acid chain: Olfactory receptor 51F1 (319 aa).

Topologically, residues 1-37 (MLQNQDTMEILSNSTSKFPTFLLTGIPGLESAHVWIS) are extracellular. The helical transmembrane segment at 38–58 (IPFCCFYAIALSGNSVILFVI) threads the bilayer. Residues 59–75 (ITQQSLHEPMYYFLFRL) are Cytoplasmic-facing. Residues 76–96 (SATDLGLTVSSLSTTLGILWF) traverse the membrane as a helical segment. The Extracellular segment spans residues 97-106 (EAREISLYSC). The cysteines at positions 106 and 188 are disulfide-linked. The helical transmembrane segment at 107–127 (IVQMFFLHGFTFMESGVLVAT) threads the bilayer. Topologically, residues 128-149 (AFDRYVAICDPLRYTTILTNSR) are cytoplasmic. A helical transmembrane segment spans residues 150-170 (IIQMGLLMITRAIVLILPLLL). At 171 to 211 (LLKPLYFCRMNALSHSYCYHPDVIQLACSDIRANSICGLID) the chain is on the extracellular side. A helical transmembrane segment spans residues 212–232 (LILTTGIDTPCIVLSYILIIH). Over 233–249 (SVLRIASPEEWHKVFST) the chain is Cytoplasmic. A helical transmembrane segment spans residues 250 to 270 (CVSHVGAVAFFYIHMLSLSLV). At 271-279 (YRYGRSAPR) the chain is on the extracellular side. Residues 280 to 300 (VVHSVMANVYLLLPPVLNPII) traverse the membrane as a helical segment. Residues 301-319 (DSVKTKQIRKAMLSLLLTK) are Cytoplasmic-facing.

Belongs to the G-protein coupled receptor 1 family.

The protein resides in the cell membrane. Functionally, odorant receptor. This chain is Olfactory receptor 51F1 (OR51F1), found in Homo sapiens (Human).